The primary structure comprises 210 residues: MKTGKFIVIEGLEGAGKSSTHQVVVNTLTEFGIHEVVFTREPGGTPLAEKLRYLIKHEAEELVTAKAELLMLYAARVQLVENVIKPALARGKWVVGDRHDLSSQAYQGGGRGLDRHLMTTLKNAVLGDFKPDFTLYLDIEPEIGLARAKGRGELDRIEQQNLDFFHRTRERYLQLVQQDPNAVLINAGQPIELVQQDIRKAVQKFIEENV.

ATP is bound at residue 11–18; the sequence is GLEGAGKS.

Belongs to the thymidylate kinase family.

The enzyme catalyses dTMP + ATP = dTDP + ADP. In terms of biological role, phosphorylation of dTMP to form dTDP in both de novo and salvage pathways of dTTP synthesis. This Histophilus somni (strain 2336) (Haemophilus somnus) protein is Thymidylate kinase.